Consider the following 626-residue polypeptide: DNA-directed RNA polymerase subunit gamma (626 aa).

Zn(2+) is bound by residues Cys71, Cys73, Cys86, and Cys89. Mg(2+)-binding residues include Asp467, Asp469, and Asp471.

It belongs to the RNA polymerase beta' chain family. RpoC1 subfamily. In cyanobacteria the RNAP catalytic core is composed of 2 alpha, 1 beta, 1 beta', 1 gamma and 1 omega subunit. When a sigma factor is associated with the core the holoenzyme is formed, which can initiate transcription. It depends on Mg(2+) as a cofactor. Zn(2+) is required as a cofactor.

The enzyme catalyses RNA(n) + a ribonucleoside 5'-triphosphate = RNA(n+1) + diphosphate. Its function is as follows. DNA-dependent RNA polymerase catalyzes the transcription of DNA into RNA using the four ribonucleoside triphosphates as substrates. The sequence is that of DNA-directed RNA polymerase subunit gamma from Microcystis aeruginosa (strain NIES-843 / IAM M-2473).